Here is a 365-residue protein sequence, read N- to C-terminus: Histidinol-phosphate aminotransferase (365 aa).

Lys222 is subject to N6-(pyridoxal phosphate)lysine.

The protein belongs to the class-II pyridoxal-phosphate-dependent aminotransferase family. Histidinol-phosphate aminotransferase subfamily. In terms of assembly, homodimer. It depends on pyridoxal 5'-phosphate as a cofactor.

The catalysed reaction is L-histidinol phosphate + 2-oxoglutarate = 3-(imidazol-4-yl)-2-oxopropyl phosphate + L-glutamate. It participates in amino-acid biosynthesis; L-histidine biosynthesis; L-histidine from 5-phospho-alpha-D-ribose 1-diphosphate: step 7/9. The protein is Histidinol-phosphate aminotransferase of Geobacillus thermodenitrificans (strain NG80-2).